The sequence spans 353 residues: Survival factor 2 (353 aa).

It belongs to the SVF1 family.

The protein resides in the cytoplasm. The protein localises to the nucleus. This Schizosaccharomyces pombe (strain 972 / ATCC 24843) (Fission yeast) protein is Survival factor 2 (svf2).